The sequence spans 146 residues: Anti-sigma F factor (146 aa).

The protein belongs to the anti-sigma-factor family.

It carries out the reaction L-seryl-[protein] + ATP = O-phospho-L-seryl-[protein] + ADP + H(+). The enzyme catalyses L-threonyl-[protein] + ATP = O-phospho-L-threonyl-[protein] + ADP + H(+). In terms of biological role, binds to sigma F and blocks its ability to form an RNA polymerase holoenzyme (E-sigma F). Phosphorylates SpoIIAA on a serine residue. This phosphorylation may enable SpoIIAA to act as an anti-anti-sigma factor that counteracts SpoIIAB and thus releases sigma F from inhibition. The chain is Anti-sigma F factor from Lysinibacillus sphaericus (Bacillus sphaericus).